The sequence spans 154 residues: NADPH-dependent 7-cyano-7-deazaguanine reductase (154 aa).

Catalysis depends on Cys52, which acts as the Thioimide intermediate. The active-site Proton donor is Asp59. Substrate is bound by residues 74–76 (VES) and 93–94 (HE).

This sequence belongs to the GTP cyclohydrolase I family. QueF type 1 subfamily.

It localises to the cytoplasm. The enzyme catalyses 7-aminomethyl-7-carbaguanine + 2 NADP(+) = 7-cyano-7-deazaguanine + 2 NADPH + 3 H(+). Its pathway is tRNA modification; tRNA-queuosine biosynthesis. In terms of biological role, catalyzes the NADPH-dependent reduction of 7-cyano-7-deazaguanine (preQ0) to 7-aminomethyl-7-deazaguanine (preQ1). The protein is NADPH-dependent 7-cyano-7-deazaguanine reductase of Paracoccus denitrificans (strain Pd 1222).